The following is a 346-amino-acid chain: Probable aldo-keto reductase 2 (346 aa).

Tyrosine 63 (proton donor) is an active-site residue. Histidine 131 lines the substrate pocket. 210 to 220 provides a ligand contact to NADP(+); that stretch reads SPLGRGFLAAG.

It belongs to the aldo/keto reductase family. Aldo/keto reductase 13 subfamily.

In Arabidopsis thaliana (Mouse-ear cress), this protein is Probable aldo-keto reductase 2 (AGD2).